We begin with the raw amino-acid sequence, 513 residues long: Laccase (513 aa).

4 consecutive Plastocyanin-like domains span residues 45-81 (PTRL…STHF), 101-178 (KTVV…HDPK), 240-318 (WPYL…ILAN), and 378-509 (QDEY…MDIT). Histidine 105, histidine 107, histidine 153, and histidine 155 together coordinate Cu cation. Positions 419, 422, 424, 491, 492, 493, 497, and 502 each coordinate Cu cation.

This sequence belongs to the multicopper oxidase family. As to quaternary structure, monomer. The cofactor is Cu(2+).

The protein localises to the spore coat. The catalysed reaction is 4 hydroquinone + O2 = 4 benzosemiquinone + 2 H2O. It carries out the reaction 2 (4Z,15Z)-bilirubin IXalpha + O2 = 2 biliverdin IXalpha + 2 H2O. With respect to regulation, inhibited by azide. In terms of biological role, multicopper oxidase that catalyzes the oxidation of a variety of substrates, including phenolic and non-phenolic compounds. Substrates include syringaldazine (SGZ), 2,6-dimethoxyphenol (2,6-DMP) and the non-phenolic compound 2,2'-azino-bis(3-ethylbenzothiazoline-6-sulfonic acid) (ABTS). Has no tyrosinase activity. Is implicated in the biosynthesis of a brownish pigment that characterizes sporulating colonies of B.subtilis, and which appears to be a melanin-like product and to confer protection against UV light. In vitro, also shows strong bilirubin oxidase (BOD) activity, and can catalyze the oxidation of free bilirubin (UB), direct bilirubin (conjugated with glucuronic acid, DB) and ditaurobilirubin. This chain is Laccase, found in Bacillus subtilis (strain 168).